The following is a 709-amino-acid chain: Phosphoprotein (709 aa).

The N0 binding stretch occupies residues 1–35; that stretch reads MDKLELVNDGLNIIDFIQKNQKEIQKTYGRSSIQQ. The disordered stretch occupies residues 53–92; sequence SGESEQVEGGMSKDDGDVERRNLEDLSSTSPTDGTIGKRV. Residues 63-76 are compositionally biased toward basic and acidic residues; sequence MSKDDGDVERRNLE. An interaction with host STAT1 region spans residues 110-140; the sequence is VVTDVVYHDHGGECTGYGFTSSPERGWSDYT. Serine 257 bears the Phosphoserine; by host mark. The segment at 265-324 is disordered; it reads ISPEDEEPSSVGGKPNESIGRTIEGQSIRDNLQAKDNKSTDVPGAGPKDSAVKEEPPQKR. Serine 350 bears the Phosphoserine; by host mark. Residues 384–473 form a disordered region; sequence VQTADRQRPG…VNPVDDNDSL (90 aa). Composition is skewed to polar residues over residues 416-426 and 444-456; these read GTENVPGSKSG and NAEN…STAV. Residues 475 to 580 are multimerization; it reads DKYIMPSDDF…LVSMMIMIPG (106 aa).

Homotetramer. Interacts (via multimerization domain) with polymerase L; this interaction forms the polymerase L-P complex. Interacts (via N-terminus) with N0 (via Ncore); this interaction allows P to chaperon N0 to avoid N polymerization before encapsidation. Interacts (via C-terminus) with N-RNA template (via C-terminus); this interaction positions the polymerase on the template for both transcription and replication. Interacts with host STAT1.

The protein resides in the virion. It localises to the host cytoplasm. Functionally, essential cofactor of the RNA polymerase L that plays a central role in the transcription and replication by forming the polymerase complex with RNA polymerase L and recruiting L to the genomic N-RNA template for RNA synthesis. Also plays a central role in the encapsidation of nascent RNA chains by forming the encapsidation complex with the nucleocapsid protein N (N-P complex). Acts as a chaperone for newly synthesized free N protein, so-called N0, allowing encapsidation of nascent RNA chains during replication. The nucleoprotein protein N prevents excessive phosphorylation of P, which leads to down-regulation of viral transcription/ replication. Participates, together with N, in the formation of viral factories (viroplasms), which are large inclusions in the host cytoplasm where replication takes place. This is Phosphoprotein (P/V/C) from Nipah virus.